Consider the following 430-residue polypeptide: Adenylosuccinate synthetase (430 aa).

Residues 12–18 (GDEGKGK) and 40–42 (GHT) each bind GTP. The Proton acceptor role is filled by Asp-13. Residues Asp-13 and Gly-40 each coordinate Mg(2+). IMP contacts are provided by residues 13 to 16 (DEGK), 38 to 41 (NAGH), Thr-128, Arg-142, Gln-223, Thr-238, and Arg-302. His-41 acts as the Proton donor in catalysis. A substrate-binding site is contributed by 298-304 (TTTGRPR). GTP-binding positions include Arg-304, 330-332 (SID), and 412-414 (SVG).

This sequence belongs to the adenylosuccinate synthetase family. In terms of assembly, homodimer. The cofactor is Mg(2+).

The protein resides in the cytoplasm. It catalyses the reaction IMP + L-aspartate + GTP = N(6)-(1,2-dicarboxyethyl)-AMP + GDP + phosphate + 2 H(+). It functions in the pathway purine metabolism; AMP biosynthesis via de novo pathway; AMP from IMP: step 1/2. Plays an important role in the de novo pathway of purine nucleotide biosynthesis. Catalyzes the first committed step in the biosynthesis of AMP from IMP. In Streptococcus agalactiae serotype III (strain NEM316), this protein is Adenylosuccinate synthetase.